A 110-amino-acid polypeptide reads, in one-letter code: uncharacterized protein (110 aa).

Transmembrane regions (helical) follow at residues 4-26 (LVGGGLMIIAGILIKLFPPKSIN), 46-68 (ANRYSASLMILSGLVIAGMGLLL), and 72-91 (LFILQLILLIAACVITFMLT).

The protein localises to the cell membrane. This is an uncharacterized protein from Bacillus subtilis (strain 168).